A 521-amino-acid chain; its full sequence is Bifunctional purine biosynthesis protein PurH (521 aa).

The MGS-like domain occupies 1–145 (MIKQALISVS…KNHRDVTVVV (145 aa)).

It belongs to the PurH family.

It carries out the reaction (6R)-10-formyltetrahydrofolate + 5-amino-1-(5-phospho-beta-D-ribosyl)imidazole-4-carboxamide = 5-formamido-1-(5-phospho-D-ribosyl)imidazole-4-carboxamide + (6S)-5,6,7,8-tetrahydrofolate. The catalysed reaction is IMP + H2O = 5-formamido-1-(5-phospho-D-ribosyl)imidazole-4-carboxamide. The protein operates within purine metabolism; IMP biosynthesis via de novo pathway; 5-formamido-1-(5-phospho-D-ribosyl)imidazole-4-carboxamide from 5-amino-1-(5-phospho-D-ribosyl)imidazole-4-carboxamide (10-formyl THF route): step 1/1. It participates in purine metabolism; IMP biosynthesis via de novo pathway; IMP from 5-formamido-1-(5-phospho-D-ribosyl)imidazole-4-carboxamide: step 1/1. The protein is Bifunctional purine biosynthesis protein PurH of Burkholderia cenocepacia (strain ATCC BAA-245 / DSM 16553 / LMG 16656 / NCTC 13227 / J2315 / CF5610) (Burkholderia cepacia (strain J2315)).